The chain runs to 55 residues: Large ribosomal subunit protein bL33 (55 aa).

Belongs to the bacterial ribosomal protein bL33 family.

The polypeptide is Large ribosomal subunit protein bL33 (Rhodopseudomonas palustris (strain BisB18)).